A 218-amino-acid chain; its full sequence is Octanoyltransferase (218 aa).

One can recognise a BPL/LPL catalytic domain in the interval glycine 30–alanine 217. Residues arginine 68 to histidine 75, alanine 148 to glycine 150, and glycine 161 to alanine 163 each bind substrate. Cysteine 179 acts as the Acyl-thioester intermediate in catalysis.

This sequence belongs to the LipB family.

The protein resides in the cytoplasm. The enzyme catalyses octanoyl-[ACP] + L-lysyl-[protein] = N(6)-octanoyl-L-lysyl-[protein] + holo-[ACP] + H(+). It functions in the pathway protein modification; protein lipoylation via endogenous pathway; protein N(6)-(lipoyl)lysine from octanoyl-[acyl-carrier-protein]: step 1/2. In terms of biological role, catalyzes the transfer of endogenously produced octanoic acid from octanoyl-acyl-carrier-protein onto the lipoyl domains of lipoate-dependent enzymes. Lipoyl-ACP can also act as a substrate although octanoyl-ACP is likely to be the physiological substrate. This chain is Octanoyltransferase, found in Paracoccus denitrificans (strain Pd 1222).